The primary structure comprises 254 residues: Small ribosomal subunit protein uS2 (254 aa).

The protein belongs to the universal ribosomal protein uS2 family.

The polypeptide is Small ribosomal subunit protein uS2 (Legionella pneumophila (strain Lens)).